The primary structure comprises 219 residues: Formate dehydrogenase 2 subunit beta (cytochrome c-553) (219 aa).

The 4Fe-4S ferredoxin-type 1 domain occupies Lys3–Val32. The [4Fe-4S] cluster site is built by Cys12, Cys15, Cys18, Cys22, Cys74, Cys77, Cys82, Cys124, Cys141, Cys144, Cys156, and Cys160. One can recognise a 4Fe-4S ferredoxin-type 2 domain in the interval Asp132 to Asp171.

In terms of assembly, heterotrimer of cytochrome c3 FDH2C and formate dehydrogenase FDH2 alpha and beta subunits that forms the FdhABC(3) complex. [4Fe-4S] cluster serves as cofactor.

The protein resides in the periplasm. Functionally, beta chain of the formate dehydrogenase (FDH) that catalyzes the reversible two-electron oxidation of formate to carbon dioxide. The beta chain is an electron transfer unit. In Nitratidesulfovibrio vulgaris (strain ATCC 29579 / DSM 644 / CCUG 34227 / NCIMB 8303 / VKM B-1760 / Hildenborough) (Desulfovibrio vulgaris), this protein is Formate dehydrogenase 2 subunit beta (cytochrome c-553).